The following is a 351-amino-acid chain: Mitochondrial mRNA pseudouridine synthase RPUSD3 (351 aa).

The N-terminal 25 residues, 1 to 25 (MRAVLAREMDGRRVLGRFWSGWRRG), are a transit peptide targeting the mitochondrion. The tract at residues 33-58 (EDAGFGTEARHQRQPRGSCQRSGPLG) is disordered. Residue Ser71 is modified to Phosphoserine.

This sequence belongs to the pseudouridine synthase RluA family. As to quaternary structure, forms a regulatory protein-RNA complex, consisting of RCC1L, NGRN, RPUSD3, RPUSD4, TRUB2, FASTKD2 and 16S mt-rRNA.

Its subcellular location is the mitochondrion matrix. The enzyme catalyses a uridine in mRNA = a pseudouridine in mRNA. In terms of biological role, catalyzes uridine to pseudouridine isomerization (pseudouridylation) of specific mitochondrial mRNAs (mt-mRNAs), a post-transcriptional modification necessary for their translation. Acts at position 390 in COXI mt-mRNA and at position 697-699 in mitochondrial COXIII mt-mRNA. As a component of a functional protein-RNA module, consisting of RCC1L, NGRN, RPUSD3, RPUSD4, TRUB2, FASTKD2 and 16S mitochondrial ribosomal RNA (16S mt-rRNA), controls 16S mt-rRNA abundance and may play a role in mitochondrial ribosome biogenesis. The polypeptide is Mitochondrial mRNA pseudouridine synthase RPUSD3 (Homo sapiens (Human)).